The following is a 476-amino-acid chain: NADH-quinone oxidoreductase subunit N (476 aa).

Helical transmembrane passes span 5–25 (LALI…LMLG), 38–58 (LSAL…FGVE), 70–90 (AFGG…ILVA), 97–117 (GMRA…GIMA), 122–142 (LMTL…LASF), 157–177 (FVLG…LYGF), 196–218 (IGLI…AVPF), 231–253 (TPVT…ARIV), 264–284 (WQQI…VGAI), 292–312 (LLAY…AAGT), 318–338 (GVLT…LVVL), 364–384 (LAAA…LFGF), 401–421 (PLAV…IAII), and 445–465 (IVAA…PALA).

Belongs to the complex I subunit 2 family. In terms of assembly, NDH-1 is composed of 14 different subunits. Subunits NuoA, H, J, K, L, M, N constitute the membrane sector of the complex.

It localises to the cell inner membrane. It carries out the reaction a quinone + NADH + 5 H(+)(in) = a quinol + NAD(+) + 4 H(+)(out). Functionally, NDH-1 shuttles electrons from NADH, via FMN and iron-sulfur (Fe-S) centers, to quinones in the respiratory chain. The immediate electron acceptor for the enzyme in this species is believed to be ubiquinone. Couples the redox reaction to proton translocation (for every two electrons transferred, four hydrogen ions are translocated across the cytoplasmic membrane), and thus conserves the redox energy in a proton gradient. This is NADH-quinone oxidoreductase subunit N from Sphingopyxis alaskensis (strain DSM 13593 / LMG 18877 / RB2256) (Sphingomonas alaskensis).